Consider the following 252-residue polypeptide: 3-dehydroquinate dehydratase (252 aa).

3-dehydroquinate is bound by residues Ser21, Glu46–Arg48, and Arg82. His143 (proton donor/acceptor) is an active-site residue. Lys170 functions as the Schiff-base intermediate with substrate in the catalytic mechanism. 3-dehydroquinate contacts are provided by Arg213, Ser232, and Gln236.

It belongs to the type-I 3-dehydroquinase family. In terms of assembly, homodimer.

The catalysed reaction is 3-dehydroquinate = 3-dehydroshikimate + H2O. The protein operates within metabolic intermediate biosynthesis; chorismate biosynthesis; chorismate from D-erythrose 4-phosphate and phosphoenolpyruvate: step 3/7. Its function is as follows. Involved in the third step of the chorismate pathway, which leads to the biosynthesis of aromatic amino acids. Catalyzes the cis-dehydration of 3-dehydroquinate (DHQ) and introduces the first double bond of the aromatic ring to yield 3-dehydroshikimate. The protein is 3-dehydroquinate dehydratase of Shigella flexneri serotype 5b (strain 8401).